The sequence spans 434 residues: Serine hydroxymethyltransferase (434 aa).

Residues leucine 128 and 132 to 134 (GHL) contribute to the (6S)-5,6,7,8-tetrahydrofolate site. Lysine 237 is modified (N6-(pyridoxal phosphate)lysine).

The protein belongs to the SHMT family. Homodimer. Requires pyridoxal 5'-phosphate as cofactor.

It is found in the cytoplasm. The enzyme catalyses (6R)-5,10-methylene-5,6,7,8-tetrahydrofolate + glycine + H2O = (6S)-5,6,7,8-tetrahydrofolate + L-serine. It participates in one-carbon metabolism; tetrahydrofolate interconversion. The protein operates within amino-acid biosynthesis; glycine biosynthesis; glycine from L-serine: step 1/1. Functionally, catalyzes the reversible interconversion of serine and glycine with tetrahydrofolate (THF) serving as the one-carbon carrier. This reaction serves as the major source of one-carbon groups required for the biosynthesis of purines, thymidylate, methionine, and other important biomolecules. Also exhibits THF-independent aldolase activity toward beta-hydroxyamino acids, producing glycine and aldehydes, via a retro-aldol mechanism. This is Serine hydroxymethyltransferase from Corynebacterium efficiens (strain DSM 44549 / YS-314 / AJ 12310 / JCM 11189 / NBRC 100395).